The sequence spans 199 residues: HTH-type transcriptional regulator BetI (199 aa).

In terms of domain architecture, HTH tetR-type spans 8 to 68 (EIRKPQLVKA…ETMREILRQL (61 aa)). Residues 31–50 (SISLISKEAGVSTGIINHYF) constitute a DNA-binding region (H-T-H motif).

The protein operates within amine and polyamine biosynthesis; betaine biosynthesis via choline pathway [regulation]. In terms of biological role, repressor involved in the biosynthesis of the osmoprotectant glycine betaine. It represses transcription of the choline transporter BetT and the genes of BetAB involved in the synthesis of glycine betaine. This is HTH-type transcriptional regulator BetI from Vibrio parahaemolyticus serotype O3:K6 (strain RIMD 2210633).